A 207-amino-acid chain; its full sequence is Large ribosomal subunit protein uL4 (207 aa).

The interval 54–76 (RSAVRGGGRKPWRQKGTGRARQG) is disordered. A compositionally biased stretch (basic residues) spans 60–71 (GGRKPWRQKGTG).

It belongs to the universal ribosomal protein uL4 family. In terms of assembly, part of the 50S ribosomal subunit.

In terms of biological role, one of the primary rRNA binding proteins, this protein initially binds near the 5'-end of the 23S rRNA. It is important during the early stages of 50S assembly. It makes multiple contacts with different domains of the 23S rRNA in the assembled 50S subunit and ribosome. Functionally, forms part of the polypeptide exit tunnel. The sequence is that of Large ribosomal subunit protein uL4 from Staphylococcus haemolyticus (strain JCSC1435).